The chain runs to 371 residues: Capsular polysaccharide phosphotransferase cps12A (371 aa).

This sequence belongs to the stealth family.

Functionally, part of a capsular polysaccharide synthesis locus. The protein is Capsular polysaccharide phosphotransferase cps12A (cps12A) of Actinobacillus pleuropneumoniae (Haemophilus pleuropneumoniae).